The sequence spans 258 residues: Trans-aconitate 2-methyltransferase (258 aa).

The protein belongs to the methyltransferase superfamily. Tam family.

Its subcellular location is the cytoplasm. It catalyses the reaction trans-aconitate + S-adenosyl-L-methionine = (E)-3-(methoxycarbonyl)pent-2-enedioate + S-adenosyl-L-homocysteine. In terms of biological role, catalyzes the S-adenosylmethionine monomethyl esterification of trans-aconitate. This Acidovorax sp. (strain JS42) protein is Trans-aconitate 2-methyltransferase.